A 518-amino-acid polypeptide reads, in one-letter code: uncharacterized protein (518 aa).

Its subcellular location is the virion. This is an uncharacterized protein from Acanthamoeba polyphaga (Amoeba).